A 251-amino-acid chain; its full sequence is Chlorophyll a-b binding protein 4, chloroplastic (251 aa).

Ser35 is subject to Phosphoserine. Chlorophyll b is bound at residue Trp57. Residues Phe77 and Glu96 each contribute to the chlorophyll a site. Residue Arg101 participates in chlorophyll b binding. A run of 2 helical transmembrane segments spans residues 102 to 122 and 135 to 155; these read WAMLGVAGMLLPEVFTKIGII and YFASSSTLFVIEFILFHYVEI. The chlorophyll b site is built by Ser138, Val144, Glu154, and Arg157. Lys204, Glu205, Asn208, Arg210, Gln222, and His237 together coordinate chlorophyll a.

The protein belongs to the light-harvesting chlorophyll a/b-binding (LHC) protein family. As to quaternary structure, the LHC complex consists of chlorophyll a-b binding proteins. Red-emitting heterodimer with LHCA1. The cofactor is Binds at least 14 chlorophylls (8 Chl-a and 6 Chl-b) and carotenoids such as lutein and neoxanthin.. Post-translationally, photoregulated by reversible phosphorylation of its threonine residues.

The protein resides in the plastid. It localises to the chloroplast thylakoid membrane. In terms of biological role, the light-harvesting complex (LHC) functions as a light receptor, it captures and delivers excitation energy to photosystems with which it is closely associated. In Arabidopsis thaliana (Mouse-ear cress), this protein is Chlorophyll a-b binding protein 4, chloroplastic.